Consider the following 89-residue polypeptide: Putative membrane protein insertion efficiency factor (89 aa).

It belongs to the UPF0161 family.

The protein resides in the cell inner membrane. Functionally, could be involved in insertion of integral membrane proteins into the membrane. The protein is Putative membrane protein insertion efficiency factor of Petrotoga mobilis (strain DSM 10674 / SJ95).